A 524-amino-acid chain; its full sequence is MTEDKITGTLVFAVLTAVLGSFQFGYDIGVINAPQQVIITHYRHVLGVPLDDRKAINSYAINSTEELPTGPYPGDPTPTSWAEEETTASASLIIMLWSLSVSIFAIGGMIASFFGGMLGDRLGRIKAMLVANILSLVGALLMWFSKLGPSHILIISGRGISGLYCGLISGLVPMYIGEIAPTKFRGAIGALHQLAIVTGILVSQIIGLDFLLGNHELWHILLGLSAVPAVLQSLMLFFCPESPRYLYIKLDEEAKARKSLKKLRGSDDVTKDITEMRKEREEASSEKKVSIIQLFTNSSYRQPILVALMLHMAQQFSGINGIFYYSTSIFQTAGISQPVYATIGVGAINTIFTALSVFLVEKAGRRSLFLIGMSGMFVCAIFMSVGLVLLDKLPWMSYVSMTAIFLFVSFFEIGPGPIPWFMVAEFFSQGPRPAALAMAAFSNWTCNFIIALCFQYIADFCGPYVFFLFAGVVLVFTLFTFFKVPETKGKSFEEIAAEFQKKSGSAQSPKAAVEMEFLGATETV.

At 1–6 (MTEDKI) the chain is on the cytoplasmic side. A helical membrane pass occupies residues 7-26 (TGTLVFAVLTAVLGSFQFGY). Residues 27-89 (DIGVINAPQQ…SWAEEETTAS (63 aa)) lie on the Extracellular side of the membrane. An N-linked (GlcNAc...) asparagine glycan is attached at asparagine 62. A helical transmembrane segment spans residues 90–115 (ASLIIMLWSLSVSIFAIGGMIASFFG). The Cytoplasmic portion of the chain corresponds to 116–126 (GMLGDRLGRIK). Residues 127-145 (AMLVANILSLVGALLMWFS) traverse the membrane as a helical segment. Topologically, residues 146 to 150 (KLGPS) are extracellular. The helical transmembrane segment at 151 to 176 (HILIISGRGISGLYCGLISGLVPMYI) threads the bilayer. Residues 177–187 (GEIAPTKFRGA) are Cytoplasmic-facing. A helical transmembrane segment spans residues 188–211 (IGALHQLAIVTGILVSQIIGLDFL). Residue glutamine 193 participates in D-glucose binding. The Extracellular segment spans residues 212-216 (LGNHE). A helical transmembrane segment spans residues 217–239 (LWHILLGLSAVPAVLQSLMLFFC). The Cytoplasmic portion of the chain corresponds to 240–303 (PESPRYLYIK…LFTNSSYRQP (64 aa)). Residues 304-327 (ILVALMLHMAQQFSGINGIFYYST) traverse the membrane as a helical segment. Residues 314 to 315 (QQ) and asparagine 320 contribute to the D-glucose site. The Extracellular segment spans residues 328–338 (SIFQTAGISQP). The chain crosses the membrane as a helical span at residues 339–360 (VYATIGVGAINTIFTALSVFLV). Residue asparagine 349 coordinates D-glucose. At 361–366 (EKAGRR) the chain is on the cytoplasmic side. Residues 367–389 (SLFLIGMSGMFVCAIFMSVGLVL) form a helical membrane-spanning segment. At 390–394 (LDKLP) the chain is on the extracellular side. The helical transmembrane segment at 395–413 (WMSYVSMTAIFLFVSFFEI) threads the bilayer. Residues glutamate 412 and tryptophan 420 each coordinate D-glucose. The Cytoplasmic segment spans residues 414 to 433 (GPGPIPWFMVAEFFSQGPRP). The helical transmembrane segment at 434–458 (AALAMAAFSNWTCNFIIALCFQYIA) threads the bilayer. Topologically, residues 459–463 (DFCGP) are extracellular. Residues 464-482 (YVFFLFAGVVLVFTLFTFF) form a helical membrane-spanning segment. Residues 483–524 (KVPETKGKSFEEIAAEFQKKSGSAQSPKAAVEMEFLGATETV) lie on the Cytoplasmic side of the membrane. Threonine 523 carries the phosphothreonine modification.

This sequence belongs to the major facilitator superfamily. Sugar transporter (TC 2.A.1.1) family. Glucose transporter subfamily. In terms of processing, N-glycosylated; required for stability and retention at the cell surface of pancreatic beta cells.

Its subcellular location is the cell membrane. The enzyme catalyses D-glucose(out) = D-glucose(in). It carries out the reaction D-fructose(out) = D-fructose(in). The catalysed reaction is L-dehydroascorbate(out) = L-dehydroascorbate(in). It catalyses the reaction D-galactose(in) = D-galactose(out). D-glucose and maltose competitively inhibit fructose transport. D-glucose, D-fructose and maltose inhibit deoxyglucose transport. Its function is as follows. Facilitative hexose transporter that mediates the transport of glucose, fructose and galactose. Likely mediates the bidirectional transfer of glucose across the plasma membrane of hepatocytes and is responsible for uptake of glucose by the beta cells; may comprise part of the glucose-sensing mechanism of the beta cell. May also participate with the Na(+)/glucose cotransporter in the transcellular transport of glucose in the small intestine and kidney. Also able to mediate the transport of dehydroascorbate. The protein is Solute carrier family 2, facilitated glucose transporter member 2 of Sus scrofa (Pig).